Here is a 371-residue protein sequence, read N- to C-terminus: Trans-enoyl reductase mycC (371 aa).

Residue 51–54 participates in NADP(+) binding; the sequence is CDWK. A substrate-binding site is contributed by 140–147; that stretch reads CVVGTVGL. NADP(+) is bound by residues 182-185, 205-208, Tyr223, and 270-271; these read STAS, SPAN, and FE. Substrate is bound at residue 291 to 295; that stretch reads GIRLL. 361–362 is an NADP(+) binding site; sequence VS.

The protein belongs to the zinc-containing alcohol dehydrogenase family. Monomer.

It carries out the reaction L-leucine + 8 malonyl-CoA + 4 S-adenosyl-L-methionine + ATP + 9 NADPH + 12 H(+) = (5S)-5-(2-methylpropyl)-3-[(2E,6R,8E,10E,12E)-6,8,10,12-tetramethyltetradeca-2,8,10,12-tetraenoyl]-2,5-dihydro-1H-pyrrol-2-one + AMP + 4 S-adenosyl-L-homocysteine + 8 CO2 + diphosphate + 9 NADP(+) + 8 CoA + 7 H2O. It participates in mycotoxin biosynthesis. Its function is as follows. Trans-enoyl reductase; part of the gene cluster that mediates the biosynthesis of myceliothermophins, mycotoxins that contain a trans-fused decalin ring system connected to a conjugated 3-pyrrolin-2-one moiety and that have potential anti-tumor properties. The polyketide synthase module (PKS) of the PKS-NRPS mycA is responsible for the synthesis of the octaketide backbone. The downstream nonribosomal peptide synthetase (NRPS) module then amidates the carboxyl end of the octaketide with a leucine. A reductase-like domain (R) at the C-terminus catalyzes the reductive release of the polyketide-amino acid intermediate. Because mycA lacks a designated enoylreductase (ER) domain, the required activity is provided the enoyl reductase mycC. Following mycA-catalyzed construction and release of aminoacyl polyketide aldehyde, Knoevenagel condensation yields the expected ketone. This C18 keto acyclic precursor is the substrate of the Diels-Alderase mycB, that catalyzes the Diels-Alder cycloaddition to produce myceliothermophin E. A yet unknown oxygenase involved in the production of myceliothermophin A, via substitution with a hydroxyl group at the C21, has still to be identified. The sequence is that of Trans-enoyl reductase mycC from Thermothelomyces thermophilus (strain ATCC 42464 / BCRC 31852 / DSM 1799) (Sporotrichum thermophile).